Here is a 343-residue protein sequence, read N- to C-terminus: Putative dihydroflavonol 4-reductase (343 aa).

Residue tyrosine 150 participates in NADP(+) binding.

Belongs to the NAD(P)-dependent epimerase/dehydratase family. Dihydroflavonol-4-reductase subfamily.

It carries out the reaction a (2R,3S,4S)-leucoanthocyanidin + NADP(+) = a (2R,3R)-dihydroflavonol + NADPH + H(+). It participates in secondary metabolite biosynthesis; flavonoid biosynthesis. The polypeptide is Putative dihydroflavonol 4-reductase (dfrA) (Synechocystis sp. (strain ATCC 27184 / PCC 6803 / Kazusa)).